We begin with the raw amino-acid sequence, 138 residues long: Large ribosomal subunit protein uL16 (138 aa).

This sequence belongs to the universal ribosomal protein uL16 family. Part of the 50S ribosomal subunit.

In terms of biological role, binds 23S rRNA and is also seen to make contacts with the A and possibly P site tRNAs. The polypeptide is Large ribosomal subunit protein uL16 (Chlamydia trachomatis serovar D (strain ATCC VR-885 / DSM 19411 / UW-3/Cx)).